The following is a 307-amino-acid chain: N-acetylmuramic acid 6-phosphate etherase (307 aa).

Residues 59 to 222 enclose the SIS domain; sequence TTKALSQGGK…STGVMVRLGK (164 aa). Glutamate 87 serves as the catalytic Proton donor. Residue glutamate 118 is part of the active site.

It belongs to the GCKR-like family. MurNAc-6-P etherase subfamily. Homodimer.

The catalysed reaction is N-acetyl-D-muramate 6-phosphate + H2O = N-acetyl-D-glucosamine 6-phosphate + (R)-lactate. It functions in the pathway amino-sugar metabolism; N-acetylmuramate degradation. Specifically catalyzes the cleavage of the D-lactyl ether substituent of MurNAc 6-phosphate, producing GlcNAc 6-phosphate and D-lactate. The protein is N-acetylmuramic acid 6-phosphate etherase of Trichodesmium erythraeum (strain IMS101).